A 608-amino-acid polypeptide reads, in one-letter code: Zinc metalloproteinase-disintegrin-like agkihagin (608 aa).

An N-terminal signal peptide occupies residues 1–20; sequence MIQVLLVTICLAAFPYQGSS. Positions 21–189 are excised as a propeptide; that stretch reads IILESGNVND…KKASQSNLTP (169 aa). One can recognise a Peptidase M12B domain in the interval 199–395; the sequence is KFVKLFLVAD…NMPQCILKKP (197 aa). Intrachain disulfides connect C310/C390, C350/C374, and C352/C357. H335 serves as a coordination point for Zn(2+). E336 is an active-site residue. 2 residues coordinate Zn(2+): H339 and H345. A Disintegrin domain is found at 403–488; it reads PPVCGNYFVE…ADCTDRFQKN (86 aa). Ca(2+) is bound by residues V405, N408, F410, E412, E415, and D418. 14 cysteine pairs are disulfide-bonded: C406-C435, C417-C430, C419-C425, C429-C452, C443-C449, C448-C474, C461-C481, C468-C499, C492-C504, C511-C561, C526-C570, C539-C549, C556-C596, and C590-C601. The D/ECD-tripeptide motif lies at 467–469; sequence ECD. Residues D469, M470, D472, D483, and R484 each contribute to the Ca(2+) site. The N-linked (GlcNAc...) asparagine glycan is linked to N501.

It belongs to the venom metalloproteinase (M12B) family. P-III subfamily. P-IIIc sub-subfamily. As to quaternary structure, homodimer; disulfide-linked. The cofactor is Zn(2+). Expressed by the venom gland.

Its subcellular location is the secreted. With respect to regulation, inhibited by EDTA and EGTA. Not inhibited by PMSF, antipain, pepstatin, and iodoacetamide. Functionally, strongly inhibits the collagen-induced human platelet aggregation. Hydrolyzes the Aalpha-chain of fibrinogen (FGA), without cleavage of Bbeta- and gamma-chains. Induces apoptosis and strongly inhibits proliferation of endothelial cells as well as adhesion of the cells to extracellular matrix proteins. The protein is Zinc metalloproteinase-disintegrin-like agkihagin of Deinagkistrodon acutus (Hundred-pace snake).